The primary structure comprises 195 residues: Probable septum site-determining protein MinC (195 aa).

It belongs to the MinC family. Interacts with MinD and FtsZ.

Cell division inhibitor that blocks the formation of polar Z ring septums. Rapidly oscillates between the poles of the cell to destabilize FtsZ filaments that have formed before they mature into polar Z rings. Prevents FtsZ polymerization. The sequence is that of Probable septum site-determining protein MinC from Helicobacter pylori (strain G27).